Here is a 267-residue protein sequence, read N- to C-terminus: Phosphatidylglycerol--prolipoprotein diacylglyceryl transferase (267 aa).

The next 3 membrane-spanning stretches (helical) occupy residues 18 to 38, 57 to 77, and 95 to 115; these read LSVRWYGLMYLIGFAFAMWFA, FLFYGMLGVILGGRIGYVLFY, and GGMSFHGGTLGVITAVVIFAW. Arg-140 contacts a 1,2-diacyl-sn-glycero-3-phospho-(1'-sn-glycerol). 3 helical membrane-spanning segments follow: residues 173–193, 200–220, and 233–253; these read SQLYEAFFEGLVLFLILQWFI, GSVAGVFLLGYGTFRFCIEYF, and FISMGQILSLPMIVGGLGLLI.

The protein belongs to the Lgt family.

It is found in the cell inner membrane. It carries out the reaction L-cysteinyl-[prolipoprotein] + a 1,2-diacyl-sn-glycero-3-phospho-(1'-sn-glycerol) = an S-1,2-diacyl-sn-glyceryl-L-cysteinyl-[prolipoprotein] + sn-glycerol 1-phosphate + H(+). Its pathway is protein modification; lipoprotein biosynthesis (diacylglyceryl transfer). In terms of biological role, catalyzes the transfer of the diacylglyceryl group from phosphatidylglycerol to the sulfhydryl group of the N-terminal cysteine of a prolipoprotein, the first step in the formation of mature lipoproteins. The sequence is that of Phosphatidylglycerol--prolipoprotein diacylglyceryl transferase from Pseudoalteromonas translucida (strain TAC 125).